A 352-amino-acid polypeptide reads, in one-letter code: MAIVSSSAGRADSQPPAAKSRVVDASPLPEEASPAREDGLRPKRLEDYIGQRELKQVLGIAVKAAMGRGDALDHVLLYGPPGLGKTTMAMVLAEELGVKCRVTSAPALERPRDIVGLLVNLQPREVLFIDEIHRLTRVAEELLYPAMEDRRLDLTVGKGSTARTRALELPPFTLVGATTRAGALSSPLRDRFGLIQRLEFYGLEDLQAIVERAAGLLRLQLTAQACQEIARRCRGTPRIANRLLRRVRDVASVCGGESLIDAALVDEALTLHRVDARGLDASDRRLLDLLLESHGGGPVGLETLAAALGEDPATLEAVVEPFLLQLGFLQRTPRGRVVTGAGRRHLGWPELP.

A disordered region spans residues 1-42 (MAIVSSSAGRADSQPPAAKSRVVDASPLPEEASPAREDGLRP). Positions 13–201 (SQPPAAKSRV…FGLIQRLEFY (189 aa)) are large ATPase domain (RuvB-L). Over residues 33-42 (SPAREDGLRP) the composition is skewed to basic and acidic residues. Positions 40, 41, 82, 85, 86, 87, 191, 201, and 238 each coordinate ATP. T86 provides a ligand contact to Mg(2+). A small ATPAse domain (RuvB-S) region spans residues 202–273 (GLEDLQAIVE…LVDEALTLHR (72 aa)). A head domain (RuvB-H) region spans residues 276–352 (ARGLDASDRR…RRHLGWPELP (77 aa)). Residues R331 and R336 each coordinate DNA.

The protein belongs to the RuvB family. As to quaternary structure, homohexamer. Forms an RuvA(8)-RuvB(12)-Holliday junction (HJ) complex. HJ DNA is sandwiched between 2 RuvA tetramers; dsDNA enters through RuvA and exits via RuvB. An RuvB hexamer assembles on each DNA strand where it exits the tetramer. Each RuvB hexamer is contacted by two RuvA subunits (via domain III) on 2 adjacent RuvB subunits; this complex drives branch migration. In the full resolvosome a probable DNA-RuvA(4)-RuvB(12)-RuvC(2) complex forms which resolves the HJ.

Its subcellular location is the cytoplasm. It catalyses the reaction ATP + H2O = ADP + phosphate + H(+). Its function is as follows. The RuvA-RuvB-RuvC complex processes Holliday junction (HJ) DNA during genetic recombination and DNA repair, while the RuvA-RuvB complex plays an important role in the rescue of blocked DNA replication forks via replication fork reversal (RFR). RuvA specifically binds to HJ cruciform DNA, conferring on it an open structure. The RuvB hexamer acts as an ATP-dependent pump, pulling dsDNA into and through the RuvAB complex. RuvB forms 2 homohexamers on either side of HJ DNA bound by 1 or 2 RuvA tetramers; 4 subunits per hexamer contact DNA at a time. Coordinated motions by a converter formed by DNA-disengaged RuvB subunits stimulates ATP hydrolysis and nucleotide exchange. Immobilization of the converter enables RuvB to convert the ATP-contained energy into a lever motion, pulling 2 nucleotides of DNA out of the RuvA tetramer per ATP hydrolyzed, thus driving DNA branch migration. The RuvB motors rotate together with the DNA substrate, which together with the progressing nucleotide cycle form the mechanistic basis for DNA recombination by continuous HJ branch migration. Branch migration allows RuvC to scan DNA until it finds its consensus sequence, where it cleaves and resolves cruciform DNA. The protein is Holliday junction branch migration complex subunit RuvB of Prochlorococcus marinus (strain MIT 9303).